Consider the following 83-residue polypeptide: UPF0248 protein TGAM_1209 (83 aa).

It belongs to the UPF0248 family.

The sequence is that of UPF0248 protein TGAM_1209 from Thermococcus gammatolerans (strain DSM 15229 / JCM 11827 / EJ3).